A 95-amino-acid chain; its full sequence is Co-chaperonin GroES (95 aa).

Residues 36–55 (QEGEVVAVGSGKTLDDGSKV) are disordered.

Belongs to the GroES chaperonin family. As to quaternary structure, heptamer of 7 subunits arranged in a ring. Interacts with the chaperonin GroEL.

The protein localises to the cytoplasm. Functionally, together with the chaperonin GroEL, plays an essential role in assisting protein folding. The GroEL-GroES system forms a nano-cage that allows encapsulation of the non-native substrate proteins and provides a physical environment optimized to promote and accelerate protein folding. GroES binds to the apical surface of the GroEL ring, thereby capping the opening of the GroEL channel. The polypeptide is Co-chaperonin GroES (Natranaerobius thermophilus (strain ATCC BAA-1301 / DSM 18059 / JW/NM-WN-LF)).